A 396-amino-acid chain; its full sequence is Phosphoglycerate kinase (396 aa).

Substrate-binding positions include 21 to 23, Arg-36, 59 to 62, Arg-118, and Arg-151; these read DLN and HFGR. ATP-binding positions include Lys-201, Glu-323, and 353–356; that span reads GGDT.

This sequence belongs to the phosphoglycerate kinase family. In terms of assembly, monomer.

The protein localises to the cytoplasm. The enzyme catalyses (2R)-3-phosphoglycerate + ATP = (2R)-3-phospho-glyceroyl phosphate + ADP. Its pathway is carbohydrate degradation; glycolysis; pyruvate from D-glyceraldehyde 3-phosphate: step 2/5. This Brucella melitensis biotype 1 (strain ATCC 23456 / CCUG 17765 / NCTC 10094 / 16M) protein is Phosphoglycerate kinase.